A 376-amino-acid polypeptide reads, in one-letter code: Hydroxylysine kinase (376 aa).

The active-site Proton acceptor is Asp-229.

This sequence belongs to the aminoglycoside phosphotransferase family.

The protein resides in the cytoplasm. The enzyme catalyses (5R)-5-hydroxy-L-lysine + GTP = (5R)-5-phosphooxy-L-lysine + GDP + H(+). In terms of biological role, catalyzes the GTP-dependent phosphorylation of 5-hydroxy-L-lysine. In Mus musculus (Mouse), this protein is Hydroxylysine kinase (Hykk).